Here is an 89-residue protein sequence, read N- to C-terminus: Small ribosomal subunit protein uS15 (89 aa).

The protein belongs to the universal ribosomal protein uS15 family. As to quaternary structure, part of the 30S ribosomal subunit. Forms a bridge to the 50S subunit in the 70S ribosome, contacting the 23S rRNA.

In terms of biological role, one of the primary rRNA binding proteins, it binds directly to 16S rRNA where it helps nucleate assembly of the platform of the 30S subunit by binding and bridging several RNA helices of the 16S rRNA. Forms an intersubunit bridge (bridge B4) with the 23S rRNA of the 50S subunit in the ribosome. This is Small ribosomal subunit protein uS15 from Photobacterium profundum (strain SS9).